Reading from the N-terminus, the 580-residue chain is Arginine--tRNA ligase (580 aa).

Residues A131 to H141 carry the 'HIGH' region motif.

The protein belongs to the class-I aminoacyl-tRNA synthetase family. As to quaternary structure, monomer.

The protein resides in the cytoplasm. The enzyme catalyses tRNA(Arg) + L-arginine + ATP = L-arginyl-tRNA(Arg) + AMP + diphosphate. The protein is Arginine--tRNA ligase of Cereibacter sphaeroides (strain ATCC 17025 / ATH 2.4.3) (Rhodobacter sphaeroides).